The sequence spans 320 residues: ATP-dependent 6-phosphofructokinase (320 aa).

An ATP-binding site is contributed by glycine 12. Residues arginine 22–arginine 26 and arginine 55–aspartate 60 each bind ADP. Residues arginine 73–phenylalanine 74 and glycine 103–serine 106 contribute to the ATP site. Aspartate 104 is a Mg(2+) binding site. Threonine 126–aspartate 128 provides a ligand contact to substrate. Aspartate 128 (proton acceptor) is an active-site residue. Arginine 155 contacts ADP. Substrate contacts are provided by residues arginine 163 and methionine 170 to arginine 172. ADP-binding positions include glycine 186–glutamate 188, lysine 212, and lysine 214–histidine 216. Residues glutamate 223, arginine 244, and histidine 250 to arginine 253 contribute to the substrate site.

The protein belongs to the phosphofructokinase type A (PFKA) family. ATP-dependent PFK group I subfamily. Prokaryotic clade 'B1' sub-subfamily. As to quaternary structure, homotetramer. Mg(2+) serves as cofactor.

It is found in the cytoplasm. It catalyses the reaction beta-D-fructose 6-phosphate + ATP = beta-D-fructose 1,6-bisphosphate + ADP + H(+). It participates in carbohydrate degradation; glycolysis; D-glyceraldehyde 3-phosphate and glycerone phosphate from D-glucose: step 3/4. With respect to regulation, allosterically activated by ADP and other diphosphonucleosides, and allosterically inhibited by phosphoenolpyruvate. Catalyzes the phosphorylation of D-fructose 6-phosphate to fructose 1,6-bisphosphate by ATP, the first committing step of glycolysis. This is ATP-dependent 6-phosphofructokinase from Citrobacter koseri (strain ATCC BAA-895 / CDC 4225-83 / SGSC4696).